A 491-amino-acid polypeptide reads, in one-letter code: (1S)-1-hydroxy-luvungin A synthase CYP88A37 (491 aa).

The chain crosses the membrane as a helical span at residues 5–25; it reads FSWLILALAIFIGTYAFVFGV. C439 contributes to the heme binding site.

This sequence belongs to the cytochrome P450 family. Requires heme as cofactor. Expressed in maturing fruits and in juice vesicles.

Its subcellular location is the membrane. The catalysed reaction is luvungin A + reduced [NADPH--hemoprotein reductase] + O2 = (1S)-1-hydroxy-luvungin A + oxidized [NADPH--hemoprotein reductase] + H2O + H(+). It participates in secondary metabolite biosynthesis; terpenoid biosynthesis. In terms of biological role, monooxygenase involved in the biosynthesis of limonoids triterpene natural products such as limonin, a compound with insecticidal activity responsible for the bitter taste in citrus. Catalyzes the conversion of luvungin A to (1S)-1-hydroxy-luvungin A. This is (1S)-1-hydroxy-luvungin A synthase CYP88A37 from Citrus sinensis (Sweet orange).